The chain runs to 290 residues: Poly-beta-1,6-N-acetyl-D-glucosamine N-deacetylase (290 aa).

An N-terminal signal peptide occupies residues 1–28 (MKYRKLIILVLSILIILPVSTLDGHHIA). The NodB homology domain maps to 114-290 (RSVWINFDDM…KRWDGFHEKD (177 aa)).

This sequence belongs to the polysaccharide deacetylase family.

The protein localises to the secreted. It is found in the cell wall. Its function is as follows. Catalyzes the N-deacetylation of poly-beta-1,6-N-acetyl-D-glucosamine (PNAG, also referred to as PIA), a biofilm adhesin polysaccharide. N-deacetylation is crucial for attachment of the polysaccharide to the bacterial cell surface; it leads to the introduction of positive charges in the otherwise neutral PIA polymer, allowing electrostatic interactions. This Staphylococcus aureus (strain Mu50 / ATCC 700699) protein is Poly-beta-1,6-N-acetyl-D-glucosamine N-deacetylase (icaB).